The sequence spans 546 residues: Chaperonin GroEL 1 (546 aa).

Residues 30–33 (TLGP), K51, 87–91 (DGTTT), G415, 479–481 (NAA), and D495 contribute to the ATP site. The segment at 526 to 546 (KEDAPMPGGMPGGMGGMGMDM) is disordered. Residues 534 to 546 (GMPGGMGGMGMDM) are compositionally biased toward gly residues.

The protein belongs to the chaperonin (HSP60) family. As to quaternary structure, forms a cylinder of 14 subunits composed of two heptameric rings stacked back-to-back. Interacts with the co-chaperonin GroES.

It is found in the cytoplasm. It carries out the reaction ATP + H2O + a folded polypeptide = ADP + phosphate + an unfolded polypeptide.. Functionally, together with its co-chaperonin GroES, plays an essential role in assisting protein folding. The GroEL-GroES system forms a nano-cage that allows encapsulation of the non-native substrate proteins and provides a physical environment optimized to promote and accelerate protein folding. The protein is Chaperonin GroEL 1 of Burkholderia pseudomallei (strain 1106a).